We begin with the raw amino-acid sequence, 587 residues long: 2-succinyl-5-enolpyruvyl-6-hydroxy-3-cyclohexene-1-carboxylate synthase (587 aa).

This sequence belongs to the TPP enzyme family. MenD subfamily. As to quaternary structure, homodimer. Mg(2+) is required as a cofactor. Requires Mn(2+) as cofactor. The cofactor is thiamine diphosphate.

The enzyme catalyses isochorismate + 2-oxoglutarate + H(+) = 5-enolpyruvoyl-6-hydroxy-2-succinyl-cyclohex-3-ene-1-carboxylate + CO2. Its pathway is quinol/quinone metabolism; 1,4-dihydroxy-2-naphthoate biosynthesis; 1,4-dihydroxy-2-naphthoate from chorismate: step 2/7. It participates in cofactor biosynthesis; phylloquinone biosynthesis. Functionally, catalyzes the thiamine diphosphate-dependent decarboxylation of 2-oxoglutarate and the subsequent addition of the resulting succinic semialdehyde-thiamine pyrophosphate anion to isochorismate to yield 2-succinyl-5-enolpyruvyl-6-hydroxy-3-cyclohexene-1-carboxylate (SEPHCHC). This chain is 2-succinyl-5-enolpyruvyl-6-hydroxy-3-cyclohexene-1-carboxylate synthase, found in Prochlorococcus marinus (strain AS9601).